Consider the following 211-residue polypeptide: Thiamine-phosphate synthase (211 aa).

4-amino-2-methyl-5-(diphosphooxymethyl)pyrimidine contacts are provided by residues 37–41 and Asn69; that span reads QLRIK. The Mg(2+) site is built by Asp70 and Asp89. Ser108 contributes to the 4-amino-2-methyl-5-(diphosphooxymethyl)pyrimidine binding site. 134–136 provides a ligand contact to 2-[(2R,5Z)-2-carboxy-4-methylthiazol-5(2H)-ylidene]ethyl phosphate; that stretch reads TQT. Position 137 (Lys137) interacts with 4-amino-2-methyl-5-(diphosphooxymethyl)pyrimidine. 2-[(2R,5Z)-2-carboxy-4-methylthiazol-5(2H)-ylidene]ethyl phosphate is bound by residues Gly166 and 186-187; that span reads IS.

The protein belongs to the thiamine-phosphate synthase family. Mg(2+) serves as cofactor.

It catalyses the reaction 2-[(2R,5Z)-2-carboxy-4-methylthiazol-5(2H)-ylidene]ethyl phosphate + 4-amino-2-methyl-5-(diphosphooxymethyl)pyrimidine + 2 H(+) = thiamine phosphate + CO2 + diphosphate. The enzyme catalyses 2-(2-carboxy-4-methylthiazol-5-yl)ethyl phosphate + 4-amino-2-methyl-5-(diphosphooxymethyl)pyrimidine + 2 H(+) = thiamine phosphate + CO2 + diphosphate. It carries out the reaction 4-methyl-5-(2-phosphooxyethyl)-thiazole + 4-amino-2-methyl-5-(diphosphooxymethyl)pyrimidine + H(+) = thiamine phosphate + diphosphate. It participates in cofactor biosynthesis; thiamine diphosphate biosynthesis; thiamine phosphate from 4-amino-2-methyl-5-diphosphomethylpyrimidine and 4-methyl-5-(2-phosphoethyl)-thiazole: step 1/1. Condenses 4-methyl-5-(beta-hydroxyethyl)thiazole monophosphate (THZ-P) and 2-methyl-4-amino-5-hydroxymethyl pyrimidine pyrophosphate (HMP-PP) to form thiamine monophosphate (TMP). This chain is Thiamine-phosphate synthase, found in Shigella boydii serotype 4 (strain Sb227).